The primary structure comprises 187 residues: Homeobox protein engrailed-like ceh-16 (187 aa).

3 disordered regions span residues 14 to 43 (PYPCPSPTISTPATSPSSISPTFASPNGTP), 60 to 100 (SDRP…DQLD), and 144 to 167 (KSTSSVPRDRCSSVTPNPHNHPSI). Positions 20 to 39 (PTISTPATSPSSISPTFASP) are enriched in low complexity. A DNA-binding region (homeobox) is located at residues 87 to 146 (EKRPRTAFTGDQLDRLKTEFRESRYLTEKRRQELAHELGLNESQIKIWFQNKRAKLKKST). Polar residues predominate over residues 145–163 (STSSVPRDRCSSVTPNPHN).

Belongs to the engrailed homeobox family. Expressed in seam cells.

It is found in the nucleus. The protein localises to the cytoplasm. Functionally, transcriptional regulator which binds to DNA to regulate gene expression and promote seam cell development and differentiation during embryogenesis. Plays a role in maintaining the boundaries between the lateral rows of seam cells and the ventral and dorsal row of epidermal cells during embryonic development. Negatively regulates the expression of the fusion effector protein eff-1 to prevent seam cell fusion with the dorsal and ventral epidermal cells during embryonic elongation. Positively regulates seam cell self-renewal and expansion during the L2 larval stage to promote seam cell development. This role does not seem to be via regulation of eff-1 expression. Specifically, it is required for the asymmetric division of the V5.p seam cell during the L2 larval stage, and in turn the asymmetric nuclear distribution of pop-1 in V5.p daughter cells. The chain is Homeobox protein engrailed-like ceh-16 from Caenorhabditis elegans.